Here is a 416-residue protein sequence, read N- to C-terminus: Phosphoglycerate kinase (416 aa).

Substrate is bound by residues 28–30 (DMN), Arg44, 65–68 (HQSR), Arg122, and Arg162. ATP contacts are provided by residues Glu337 and 362-365 (GGHI).

Belongs to the phosphoglycerate kinase family. In terms of assembly, monomer.

It localises to the cytoplasm. It catalyses the reaction (2R)-3-phosphoglycerate + ATP = (2R)-3-phospho-glyceroyl phosphate + ADP. The protein operates within carbohydrate degradation; glycolysis; pyruvate from D-glyceraldehyde 3-phosphate: step 2/5. The polypeptide is Phosphoglycerate kinase (Methanosarcina mazei (strain ATCC BAA-159 / DSM 3647 / Goe1 / Go1 / JCM 11833 / OCM 88) (Methanosarcina frisia)).